Consider the following 56-residue polypeptide: uncharacterized protein (56 aa).

Belongs to the archaeal ATPase family.

This is an uncharacterized protein from Methanocaldococcus jannaschii (strain ATCC 43067 / DSM 2661 / JAL-1 / JCM 10045 / NBRC 100440) (Methanococcus jannaschii).